We begin with the raw amino-acid sequence, 318 residues long: Aspartate carbamoyltransferase catalytic subunit (318 aa).

Arginine 58 and threonine 59 together coordinate carbamoyl phosphate. Lysine 86 contacts L-aspartate. Arginine 108, histidine 141, and glutamine 144 together coordinate carbamoyl phosphate. Arginine 174 and arginine 226 together coordinate L-aspartate. Positions 270 and 271 each coordinate carbamoyl phosphate.

The protein belongs to the aspartate/ornithine carbamoyltransferase superfamily. ATCase family. As to quaternary structure, heterododecamer (2C3:3R2) of six catalytic PyrB chains organized as two trimers (C3), and six regulatory PyrI chains organized as three dimers (R2).

It catalyses the reaction carbamoyl phosphate + L-aspartate = N-carbamoyl-L-aspartate + phosphate + H(+). It participates in pyrimidine metabolism; UMP biosynthesis via de novo pathway; (S)-dihydroorotate from bicarbonate: step 2/3. Its function is as follows. Catalyzes the condensation of carbamoyl phosphate and aspartate to form carbamoyl aspartate and inorganic phosphate, the committed step in the de novo pyrimidine nucleotide biosynthesis pathway. The chain is Aspartate carbamoyltransferase catalytic subunit from Lactobacillus helveticus (strain DPC 4571).